The chain runs to 399 residues: Phosphoglycerate kinase (399 aa).

Substrate contacts are provided by residues 21–23, Arg36, 59–62, Arg120, and Arg158; these read DFN and HLGR. ATP-binding positions include Lys209, Gly297, Glu328, and 355 to 358; that span reads GGDS.

This sequence belongs to the phosphoglycerate kinase family. Monomer.

It localises to the cytoplasm. The catalysed reaction is (2R)-3-phosphoglycerate + ATP = (2R)-3-phospho-glyceroyl phosphate + ADP. Its pathway is carbohydrate degradation; glycolysis; pyruvate from D-glyceraldehyde 3-phosphate: step 2/5. This Streptococcus suis (strain 05ZYH33) protein is Phosphoglycerate kinase.